A 407-amino-acid chain; its full sequence is Schlafen-like protein 1 (407 aa).

Disordered stretches follow at residues 1–28 (MTPM…LPEL) and 137–191 (AQGP…CQGR). A compositionally biased stretch (low complexity) spans 155–167 (GLSPGPSPGSGVP). Over residues 181–190 (QAQQLQSCQG) the composition is skewed to polar residues. 261 to 268 (GVEDSGLV) contacts ATP. Positions 366 to 398 (RQRWLVELGKLEEKMKALMMEKEQLQQQLQQHG) form a coiled coil.

Belongs to the Schlafen family. Subgroup I subfamily.

In Homo sapiens (Human), this protein is Schlafen-like protein 1 (SLFNL1).